A 329-amino-acid polypeptide reads, in one-letter code: Acetoacetyl CoA synthase NphT7 (329 aa).

Residues Cys115, His256, and Asn286 contribute to the active site.

This sequence belongs to the thiolase-like superfamily. FabH family. In terms of assembly, homodimer.

It is found in the cytoplasm. It carries out the reaction malonyl-CoA + acetyl-CoA + H(+) = acetoacetyl-CoA + CO2 + CoA. It functions in the pathway metabolic intermediate biosynthesis; (R)-mevalonate biosynthesis. Its function is as follows. Catalyzes the condensation of acetyl-CoA and malonyl-CoA to form acetoacetyl-CoA and CoA. Does not accept malonyl-[acyl-carrier-protein] as a substrate. Can also convert malonyl-CoA into acetyl-CoA via decarboxylation of malonyl-CoA. The chain is Acetoacetyl CoA synthase NphT7 (nphT7) from Streptomyces sp. (strain CL190).